The primary structure comprises 597 residues: Polyphenol oxidase latent form, chloroplastic (597 aa).

The N-terminal 49 residues, 1–49, are a transit peptide targeting the chloroplast; that stretch reads MATAPSPTTMGTYSSLISTNSFSTFLPNKSQLSLSGKSKHYVARRSSIS. Residues 49-70 form a disordered region; it reads SCKATNNNNSNNQNEQQEESSR. The transit peptide at 50-101 directs the protein to the thylakoid; the sequence is CKATNNNNSNNQNEQQEESSRLLGKLDRRNILIGLGGLYGATTLDRKPFAFA. Residues 54-63 are compositionally biased toward low complexity; it reads NNNNSNNQNE. 2 cysteine pairs are disulfide-bonded: Cys112–Cys128 and Cys127–Cys189. Cu cation is bound by residues His188, His209, His218, His341, His345, and His375. A cross-link (2'-(S-cysteinyl)-histidine (Cys-His)) is located at residues 192 to 209; that stretch reads CNGAYPQVGFTDNDIQVH.

It belongs to the tyrosinase family. As to quaternary structure, monomer. Cu(2+) is required as a cofactor. Expressed in immature-green fruit.

Its subcellular location is the plastid. The protein resides in the chloroplast thylakoid lumen. It catalyses the reaction 2 catechol + O2 = 2 1,2-benzoquinone + 2 H2O. Activated in the presence of substrate at low pH. Specific activity fluctuates during fruit ripening, starting at immature-green stage, reaching a peak at the breaker stage, followed by a sharp decrease until the half-ripe stage to remain stable during the following development stages. Triggered by CuSO(4) and by low concentrations of SDS. Repressed by several inhibitors including 4-hexylresorcinol, ascorbic acid, benzoic acid, kojic acid, glutathione (reduced form), L-cysteine and sodium metabisulfite. Inhibited by various salt such as FeSO(4), KCl, NaCl, CaCl(2), MnCl(2), NiCl(2) and AlCl(3). Spontaneously activated during storage at 4 degrees Celsius. In terms of biological role, catalyzes the oxidation of mono- and o-diphenols to o-diquinones. Uses preferentially 4-methylcatechol and chlorogenic acid as substrates, followed by caffeic acid, pyrogallol, and catechol, but barely active toward dopamine and L-dopa. No activity detected with monophenols (e.g. phenol and tyramine). This chain is Polyphenol oxidase latent form, chloroplastic, found in Prunus armeniaca (Apricot).